The sequence spans 185 residues: dTTP/UTP pyrophosphatase (185 aa).

Asp67 (proton acceptor) is an active-site residue.

It belongs to the Maf family. YhdE subfamily. It depends on a divalent metal cation as a cofactor.

The protein localises to the cytoplasm. The enzyme catalyses dTTP + H2O = dTMP + diphosphate + H(+). It carries out the reaction UTP + H2O = UMP + diphosphate + H(+). Functionally, nucleoside triphosphate pyrophosphatase that hydrolyzes dTTP and UTP. May have a dual role in cell division arrest and in preventing the incorporation of modified nucleotides into cellular nucleic acids. In Lacticaseibacillus casei (strain BL23) (Lactobacillus casei), this protein is dTTP/UTP pyrophosphatase.